Consider the following 288-residue polypeptide: ATP synthase gamma chain (288 aa).

This sequence belongs to the ATPase gamma chain family. In terms of assembly, F-type ATPases have 2 components, CF(1) - the catalytic core - and CF(0) - the membrane proton channel. CF(1) has five subunits: alpha(3), beta(3), gamma(1), delta(1), epsilon(1). CF(0) has three main subunits: a, b and c.

Its subcellular location is the cell inner membrane. Functionally, produces ATP from ADP in the presence of a proton gradient across the membrane. The gamma chain is believed to be important in regulating ATPase activity and the flow of protons through the CF(0) complex. The chain is ATP synthase gamma chain from Trichlorobacter lovleyi (strain ATCC BAA-1151 / DSM 17278 / SZ) (Geobacter lovleyi).